Consider the following 385-residue polypeptide: UDP-N-acetylglucosamine--N-acetylmuramyl-(pentapeptide) pyrophosphoryl-undecaprenol N-acetylglucosamine transferase (385 aa).

UDP-N-acetyl-alpha-D-glucosamine is bound by residues 11–13 (TGG), asparagine 117, arginine 160, serine 215, and glutamine 317.

This sequence belongs to the glycosyltransferase 28 family. MurG subfamily.

Its subcellular location is the cell inner membrane. It catalyses the reaction di-trans,octa-cis-undecaprenyl diphospho-N-acetyl-alpha-D-muramoyl-L-alanyl-D-glutamyl-meso-2,6-diaminopimeloyl-D-alanyl-D-alanine + UDP-N-acetyl-alpha-D-glucosamine = di-trans,octa-cis-undecaprenyl diphospho-[N-acetyl-alpha-D-glucosaminyl-(1-&gt;4)]-N-acetyl-alpha-D-muramoyl-L-alanyl-D-glutamyl-meso-2,6-diaminopimeloyl-D-alanyl-D-alanine + UDP + H(+). It participates in cell wall biogenesis; peptidoglycan biosynthesis. In terms of biological role, cell wall formation. Catalyzes the transfer of a GlcNAc subunit on undecaprenyl-pyrophosphoryl-MurNAc-pentapeptide (lipid intermediate I) to form undecaprenyl-pyrophosphoryl-MurNAc-(pentapeptide)GlcNAc (lipid intermediate II). In Rickettsia typhi (strain ATCC VR-144 / Wilmington), this protein is UDP-N-acetylglucosamine--N-acetylmuramyl-(pentapeptide) pyrophosphoryl-undecaprenol N-acetylglucosamine transferase.